A 416-amino-acid chain; its full sequence is Gamma-glutamyl phosphate reductase (416 aa).

This sequence belongs to the gamma-glutamyl phosphate reductase family.

It localises to the cytoplasm. It catalyses the reaction L-glutamate 5-semialdehyde + phosphate + NADP(+) = L-glutamyl 5-phosphate + NADPH + H(+). The protein operates within amino-acid biosynthesis; L-proline biosynthesis; L-glutamate 5-semialdehyde from L-glutamate: step 2/2. Catalyzes the NADPH-dependent reduction of L-glutamate 5-phosphate into L-glutamate 5-semialdehyde and phosphate. The product spontaneously undergoes cyclization to form 1-pyrroline-5-carboxylate. The protein is Gamma-glutamyl phosphate reductase of Streptococcus thermophilus (strain ATCC BAA-491 / LMD-9).